The sequence spans 695 residues: UvrABC system protein B (695 aa).

The Helicase ATP-binding domain maps to 45-434 (EGIEDGLSFQ…QVVEQVVRPT (390 aa)). 58-65 (GVTGSGKT) is an ATP binding site. The Beta-hairpin signature appears at 111-134 (YYDYYQPEAYVPQRDLFIEKDSSI). In terms of domain architecture, Helicase C-terminal spans 449-602 (QVDDLLSEIN…QMAFNEANGI (154 aa)). In terms of domain architecture, UVR spans 646–681 (SKEIKRLEKLMMDHAKNLEFEKAAQVRDQLAKLKAQ).

It belongs to the UvrB family. Forms a heterotetramer with UvrA during the search for lesions. Interacts with UvrC in an incision complex.

It is found in the cytoplasm. Its function is as follows. The UvrABC repair system catalyzes the recognition and processing of DNA lesions. A damage recognition complex composed of 2 UvrA and 2 UvrB subunits scans DNA for abnormalities. Upon binding of the UvrA(2)B(2) complex to a putative damaged site, the DNA wraps around one UvrB monomer. DNA wrap is dependent on ATP binding by UvrB and probably causes local melting of the DNA helix, facilitating insertion of UvrB beta-hairpin between the DNA strands. Then UvrB probes one DNA strand for the presence of a lesion. If a lesion is found the UvrA subunits dissociate and the UvrB-DNA preincision complex is formed. This complex is subsequently bound by UvrC and the second UvrB is released. If no lesion is found, the DNA wraps around the other UvrB subunit that will check the other stand for damage. This chain is UvrABC system protein B, found in Cupriavidus pinatubonensis (strain JMP 134 / LMG 1197) (Cupriavidus necator (strain JMP 134)).